The following is a 276-amino-acid chain: Putative pyridoxine kinase (276 aa).

Asparagine 139 provides a ligand contact to ATP. Residue glutamate 142 coordinates Mg(2+). ATP is bound by residues 176 to 180 (KGGKA), aspartate 188, glycine 213, and lysine 238.

It belongs to the ThiD family.

It carries out the reaction pyridoxal + ATP = pyridoxal 5'-phosphate + ADP + H(+). Functionally, phosphorylates B6 vitamers; functions in a salvage pathway. Uses pyridoxal, pyridoxine, and pyridoxamine as substrates. This chain is Putative pyridoxine kinase (pdxK), found in Staphylococcus epidermidis (strain ATCC 35984 / DSM 28319 / BCRC 17069 / CCUG 31568 / BM 3577 / RP62A).